Reading from the N-terminus, the 466-residue chain is Arginine biosynthesis bifunctional protein ArgJ, mitochondrial (466 aa).

A mitochondrion-targeting transit peptide spans 1–9 (MSSLVLKRF). Substrate is bound by residues Thr-183, Lys-209, Thr-232, Glu-320, Asn-461, and Ser-466. The active-site Nucleophile is the Thr-232.

It belongs to the ArgJ family. As to quaternary structure, heterodimer of an alpha and a beta chain. The alpha and beta chains are autoproteolytically processed from a single precursor protein within the mitochondrion.

The protein localises to the mitochondrion matrix. It catalyses the reaction N(2)-acetyl-L-ornithine + L-glutamate = N-acetyl-L-glutamate + L-ornithine. The enzyme catalyses L-glutamate + acetyl-CoA = N-acetyl-L-glutamate + CoA + H(+). It participates in amino-acid biosynthesis; L-arginine biosynthesis; L-ornithine and N-acetyl-L-glutamate from L-glutamate and N(2)-acetyl-L-ornithine (cyclic): step 1/1. Its pathway is amino-acid biosynthesis; L-arginine biosynthesis; N(2)-acetyl-L-ornithine from L-glutamate: step 1/4. Catalyzes two activities which are involved in the cyclic version of arginine biosynthesis: the synthesis of acetylglutamate from glutamate and acetyl-CoA, and of ornithine by transacetylation between acetylornithine and glutamate. In Laccaria bicolor (strain S238N-H82 / ATCC MYA-4686) (Bicoloured deceiver), this protein is Arginine biosynthesis bifunctional protein ArgJ, mitochondrial.